Consider the following 444-residue polypeptide: Probable D-serine dehydratase (444 aa).

Lys118 is subject to N6-(pyridoxal phosphate)lysine.

This sequence belongs to the serine/threonine dehydratase family. DsdA subfamily. Pyridoxal 5'-phosphate is required as a cofactor.

The enzyme catalyses D-serine = pyruvate + NH4(+). The protein is Probable D-serine dehydratase of Desulfitobacterium hafniense (strain Y51).